The sequence spans 212 residues: Thymidylate kinase (212 aa).

11 to 18 (GPDGAGKS) contacts ATP.

This sequence belongs to the thymidylate kinase family.

It catalyses the reaction dTMP + ATP = dTDP + ADP. Its function is as follows. Phosphorylation of dTMP to form dTDP in both de novo and salvage pathways of dTTP synthesis. The polypeptide is Thymidylate kinase (Streptococcus gordonii (strain Challis / ATCC 35105 / BCRC 15272 / CH1 / DL1 / V288)).